We begin with the raw amino-acid sequence, 177 residues long: Large ribosomal subunit protein uL6 (177 aa).

It belongs to the universal ribosomal protein uL6 family. As to quaternary structure, part of the 50S ribosomal subunit.

Functionally, this protein binds to the 23S rRNA, and is important in its secondary structure. It is located near the subunit interface in the base of the L7/L12 stalk, and near the tRNA binding site of the peptidyltransferase center. The protein is Large ribosomal subunit protein uL6 of Sinorhizobium fredii (strain NBRC 101917 / NGR234).